We begin with the raw amino-acid sequence, 502 residues long: Maturase K (502 aa).

This sequence belongs to the intron maturase 2 family. MatK subfamily.

It is found in the plastid. The protein localises to the chloroplast. Functionally, usually encoded in the trnK tRNA gene intron. Probably assists in splicing its own and other chloroplast group II introns. The chain is Maturase K from Theobroma cacao (Cacao).